Reading from the N-terminus, the 65-residue chain is Alpha-conotoxine-like Am1.5 (65 aa).

The first 21 residues, 1–21, serve as a signal peptide directing secretion; the sequence is MGMRMMFTVFLLVVLATTVVS. Positions 22-46 are excised as a propeptide; sequence FMSGRAFRDRNAAAKVSDLIALKAR. Glu49 carries the post-translational modification 4-carboxyglutamate. Positions 52–54 are ser-Xaa-Pro motif, crucial for potent interaction with nAChR; that stretch reads SHP. Residues Pro54 and Pro61 each carry the 4-hydroxyproline modification. A 4-carboxyglutamate modification is found at Glu62.

This sequence belongs to the conotoxin A superfamily. Post-translationally, contains 2 disulfide bonds. As to expression, expressed by the venom duct.

It localises to the secreted. Functionally, alpha-conotoxins act on postsynaptic membranes, they bind to the nicotinic acetylcholine receptors (nAChR) and thus inhibit them. The polypeptide is Alpha-conotoxine-like Am1.5 (Conus amadis (Amadis cone)).